The primary structure comprises 570 residues: Peptidyl-prolyl cis-trans isomerase FKBP9 (570 aa).

Residues 1-24 (MAFRGWRPPPPPLLLLLLWVTGQA) form the signal peptide. PPIase FKBP-type domains lie at 54–142 (GDFV…MDIW), 166–254 (SDFV…LDLH), 278–365 (GDFL…IDFH), and 389–477 (GDYL…LELV). N174, N286, N302, and N397 each carry an N-linked (GlcNAc...) asparagine glycan. EF-hand domains are found at residues 488 to 523 (WNGE…QVAS) and 533 to 568 (DAEL…AKHD). The Ca(2+) site is built by D501, D503, N505, E507, E512, D546, N548, D550, K552, and E557. The short motif at 567–570 (HDEL) is the Prevents secretion from ER element.

In terms of processing, phosphorylated.

It localises to the endoplasmic reticulum. It carries out the reaction [protein]-peptidylproline (omega=180) = [protein]-peptidylproline (omega=0). Its activity is regulated as follows. Inhibited by FK506. PPIases accelerate the folding of proteins during protein synthesis. In Homo sapiens (Human), this protein is Peptidyl-prolyl cis-trans isomerase FKBP9 (FKBP9).